A 306-amino-acid polypeptide reads, in one-letter code: Aspartate carbamoyltransferase catalytic subunit (306 aa).

The carbamoyl phosphate site is built by Arg-53 and Thr-54. Lys-82 is a binding site for L-aspartate. Residues Arg-103, His-131, and Gln-134 each contribute to the carbamoyl phosphate site. L-aspartate contacts are provided by Arg-164 and Arg-226. Positions 263 and 264 each coordinate carbamoyl phosphate.

The protein belongs to the aspartate/ornithine carbamoyltransferase superfamily. ATCase family. Heterododecamer (2C3:3R2) of six catalytic PyrB chains organized as two trimers (C3), and six regulatory PyrI chains organized as three dimers (R2).

The catalysed reaction is carbamoyl phosphate + L-aspartate = N-carbamoyl-L-aspartate + phosphate + H(+). The protein operates within pyrimidine metabolism; UMP biosynthesis via de novo pathway; (S)-dihydroorotate from bicarbonate: step 2/3. Catalyzes the condensation of carbamoyl phosphate and aspartate to form carbamoyl aspartate and inorganic phosphate, the committed step in the de novo pyrimidine nucleotide biosynthesis pathway. This chain is Aspartate carbamoyltransferase catalytic subunit, found in Methanocaldococcus jannaschii (strain ATCC 43067 / DSM 2661 / JAL-1 / JCM 10045 / NBRC 100440) (Methanococcus jannaschii).